Reading from the N-terminus, the 447-residue chain is Serine/threonine-protein phosphatase 2A 55 kDa regulatory subunit B gamma isoform (447 aa).

7 WD repeats span residues 22–61, 87–128, 171–209, 220–260, 279–317, 334–375, and 410–446; these read TEAD…KNAP, EIEE…KRPE, GHTY…RSFN, DLTE…LCDK, EIIS…RPIE, ESDC…DVTL, and DFTK…NSDM.

Belongs to the phosphatase 2A regulatory subunit B family. PP2A consists of a common heterodimeric core enzyme, composed of a 36 kDa catalytic subunit (subunit C) and a 65 kDa constant regulatory subunit (PR65 or subunit A), that associates with a variety of regulatory subunits. Proteins that associate with the core dimer include three families of regulatory subunits B (the R2/B/PR55/B55, R3/B''/PR72/PR130/PR59 and R5/B'/B56 families), the 48 kDa variable regulatory subunit, viral proteins, and cell signaling molecules. Interacts with IER5.

Its function is as follows. The B regulatory subunit might modulate substrate selectivity and catalytic activity, and might also direct the localization of the catalytic enzyme to a particular subcellular compartment. The sequence is that of Serine/threonine-protein phosphatase 2A 55 kDa regulatory subunit B gamma isoform (Ppp2r2c) from Mus musculus (Mouse).